A 611-amino-acid polypeptide reads, in one-letter code: Pseudomonine synthase PmsE (611 aa).

Residues 533–608 (VSVENTRTWL…SWWALVEARQ (76 aa)) form the Carrier domain. O-(pantetheine 4'-phosphoryl)serine is present on S569.

Belongs to the ATP-dependent AMP-binding enzyme family. Pantetheine 4'-phosphate serves as cofactor.

The catalysed reaction is salicylate + holo-[ACP] + ATP = salicyl-[ACP] + AMP + diphosphate. The protein operates within siderophore biosynthesis; pseudomonine biosynthesis. In terms of biological role, involved in the biosynthesis of the siderophore pseudomonine. Specifically adenylates salicylate and loads it onto its peptidyl carrier domain, via a thioester linkage to the phosphopanthetheine moiety. This is Pseudomonine synthase PmsE from Pseudomonas entomophila (strain L48).